The sequence spans 76 residues: Adropin (76 aa).

An N-terminal signal peptide occupies residues 1–33; that stretch reads MGAALSQGALIAIICNGLVGFLLLLLWVILCWA. The interval 41-76 is disordered; that stretch reads IDSLSESSPNSSPGPCPEKAPPPQKPSHEGSYLLQP. A compositionally biased stretch (pro residues) spans 52–65; sequence SPGPCPEKAPPPQK.

It is found in the secreted. Functionally, involved in the regulation of glucose homeostasis and lipid metabolism. The protein is Adropin (ENHO) of Bos taurus (Bovine).